An 836-amino-acid chain; its full sequence is MMSEYWIISAPGDKTCQQTYDTMNNLTSKQHNLCNNYKFHIPDLKVGTLDQLVGLSDDLGKLDTYVEQITRKVANYLGEVLEDQRDKLHENLMANNSPGPPDDSMPCRHHQRIKHLSLRHQRKHQHTHHQNKPQHYHHHHHHHQLPQDLKGKSAATCSPATPPAPASAPPHLPPACACDVLAPGSLTGGSLTNLSTSHEPEPEFDVCPCDECFACAPPSTSATASTLLADECYSQTASSMLSATRCALSTVAAIATGSGLGNGPSTSAAAAAAASNSSGGGGGGGPASCSTLCSSAYFSTSAPTTSSSVHSSMSRSNSKRLNNNTCSINNNKLSFRSGSHVSQLHLATQQPQHHHSHPHQQPHTNPLQSPVQKSMSEDEGDASNAHEDGETDEDPKSPHSVQSDLSDAFDWWFNKPKRNSKKSSAQQQHETAQLQHQQTTQQHATPLTPQNHNQYQNQHLSKAMTFWHQASTTPRSSYRSFFNSLADQIYSKRSTPSQLNINNGFNLTPTHRSSPVSSCCGSSSQGRSSPDTDPAEPPEFPLSPAELPQYLTRFQWDMAKYPIKQSLRNIADIISKQIGQIDGDLKTKSQAYNNLKGNLQNLEKKKTGSLLTRNLADLVKKEHFILDSEYLTTLLVIVPKVMANDWLTNYEKITDMIVPRSSQLIQEDADYCLFNVTLFKKVAEEFKLHARERKFIVRDFVYNEEELAAGKNEMTKLMTDKKKQFGPLVRWLKVNFSEAFCALIHVKALRVFVESVLRYGLPVNFQAILIEPNKKSVKRLRDVLNQLYGHLDGASAGGAVSSADNVDIPGLGFGQSEYFPYVFYKVNIDMVEQAKV.

A compositionally biased stretch (basic residues) spans 116-144; that stretch reads LSLRHQRKHQHTHHQNKPQHYHHHHHHHQ. 4 disordered regions span residues 116 to 169, 302 to 403, 415 to 453, and 496 to 544; these read LSLR…ASAP, APTT…SVQS, KPKR…QNHN, and PSQL…PLSP. Residues 160 to 169 show a composition bias toward pro residues; sequence ATPPAPASAP. Over residues 302–316 the composition is skewed to low complexity; that stretch reads APTTSSSVHSSMSRS. Composition is skewed to polar residues over residues 319 to 348 and 364 to 374; these read KRLN…HLAT and TNPLQSPVQKS. Residues 425 to 450 show a composition bias toward low complexity; that stretch reads AQQQHETAQLQHQQTTQQHATPLTPQ. Residues 496 to 511 show a composition bias toward polar residues; sequence PSQLNINNGFNLTPTH. Low complexity predominate over residues 512 to 529; the sequence is RSSPVSSCCGSSSQGRSS.

The protein belongs to the V-ATPase C subunit family. As to quaternary structure, V-ATPase is a heteromultimeric enzyme made up of two complexes: the ATP-hydrolytic V1 complex and the proton translocation V0 complex. The V1 complex consists of three catalytic AB heterodimers that form a heterohexamer, three peripheral stalks each consisting of EG heterodimers, one central rotor including subunits D and F, and the regulatory subunits C and H. The proton translocation complex V0 consists of the proton transport subunit a, a ring of proteolipid subunits c9c'', rotary subunit d, subunits e and f, and the accessory subunits VhaAC45 and ATP6AP2. In larvae, expressed in the ring gland, CNS, imaginal disks and lymph gland.

Functionally, subunit of the V1 complex of vacuolar(H+)-ATPase (V-ATPase), a multisubunit enzyme composed of a peripheral complex (V1) that hydrolyzes ATP and a membrane integral complex (V0) that translocates protons. V-ATPase is responsible for acidifying and maintaining the pH of intracellular compartments and in some cell types, is targeted to the plasma membrane, where it is responsible for acidifying the extracellular environment. Subunit C is necessary for the assembly of the catalytic sector of the enzyme and is likely to have a specific function in its catalytic activity. In enterocytes, acts as part of a pHCl-2 sensory pathway which mediates Tor-dependent larval growth and metabolism in response to zinc availability. Likely acts in maintaining enterocyte lysosomal acidification which consequently promotes Tor activation at the lysosome membrane. This Drosophila melanogaster (Fruit fly) protein is V-type proton ATPase subunit C (Vha44).